Reading from the N-terminus, the 155-residue chain is MGASVKPAARRNARQFALQAIYSWQITKENVATIEAQFLAGEKYDEEEHRAAEPALAAPETDVAYFRDLLTGVVLSHTELDSKIRPYVSRPMQDLDMMELALLRLAMYEMTRREDVPYKVVINEAIELAKVFAAEDSHKFVNGVLDKAAPHVRKK.

It belongs to the NusB family.

Functionally, involved in transcription antitermination. Required for transcription of ribosomal RNA (rRNA) genes. Binds specifically to the boxA antiterminator sequence of the ribosomal RNA (rrn) operons. The polypeptide is Transcription antitermination protein NusB (Vibrio vulnificus (strain CMCP6)).